We begin with the raw amino-acid sequence, 686 residues long: Translation initiation factor IF-2 (686 aa).

The interval lysine 54–aspartate 105 is disordered. A compositionally biased stretch (basic residues) spans arginine 69 to glycine 81. Positions glutamate 188–lysine 357 constitute a tr-type G domain. The tract at residues glycine 197–threonine 204 is G1. Residue glycine 197–threonine 204 participates in GTP binding. The segment at glycine 222–histidine 226 is G2. A G3 region spans residues aspartate 243–glycine 246. GTP-binding positions include aspartate 243 to histidine 247 and asparagine 297 to aspartate 300. The interval asparagine 297–aspartate 300 is G4. The interval serine 333–isoleucine 335 is G5.

Belongs to the TRAFAC class translation factor GTPase superfamily. Classic translation factor GTPase family. IF-2 subfamily.

Its subcellular location is the cytoplasm. Functionally, one of the essential components for the initiation of protein synthesis. Protects formylmethionyl-tRNA from spontaneous hydrolysis and promotes its binding to the 30S ribosomal subunits. Also involved in the hydrolysis of GTP during the formation of the 70S ribosomal complex. The polypeptide is Translation initiation factor IF-2 (Bacillus anthracis (strain A0248)).